The sequence spans 513 residues: Lysine--tRNA ligase (513 aa).

Mg(2+) is bound by residues E423 and E430.

This sequence belongs to the class-II aminoacyl-tRNA synthetase family. Homodimer. Mg(2+) is required as a cofactor.

The protein localises to the cytoplasm. The enzyme catalyses tRNA(Lys) + L-lysine + ATP = L-lysyl-tRNA(Lys) + AMP + diphosphate. This Anaeromyxobacter dehalogenans (strain 2CP-1 / ATCC BAA-258) protein is Lysine--tRNA ligase.